The following is a 197-amino-acid chain: Dephospho-CoA kinase (197 aa).

Residues 4 to 197 (RLGLTGSIGM…RQIRAGNIHA (194 aa)) form the DPCK domain. 12–17 (GMGKST) is a binding site for ATP.

This sequence belongs to the CoaE family.

It localises to the cytoplasm. It carries out the reaction 3'-dephospho-CoA + ATP = ADP + CoA + H(+). It participates in cofactor biosynthesis; coenzyme A biosynthesis; CoA from (R)-pantothenate: step 5/5. In terms of biological role, catalyzes the phosphorylation of the 3'-hydroxyl group of dephosphocoenzyme A to form coenzyme A. The sequence is that of Dephospho-CoA kinase from Ruegeria pomeroyi (strain ATCC 700808 / DSM 15171 / DSS-3) (Silicibacter pomeroyi).